The chain runs to 604 residues: Aspartate--tRNA(Asp/Asn) ligase (604 aa).

E187 serves as a coordination point for L-aspartate. The aspartate stretch occupies residues 211 to 214 (QQFK). L-aspartate contacts are provided by R233 and H461. Position 233–235 (233–235 (RDE)) interacts with ATP. Residue E495 coordinates ATP. R502 is an L-aspartate binding site. 547–550 (GLDR) provides a ligand contact to ATP.

The protein belongs to the class-II aminoacyl-tRNA synthetase family. Type 1 subfamily. Homodimer.

It localises to the cytoplasm. It carries out the reaction tRNA(Asx) + L-aspartate + ATP = L-aspartyl-tRNA(Asx) + AMP + diphosphate. In terms of biological role, aspartyl-tRNA synthetase with relaxed tRNA specificity since it is able to aspartylate not only its cognate tRNA(Asp) but also tRNA(Asn). Reaction proceeds in two steps: L-aspartate is first activated by ATP to form Asp-AMP and then transferred to the acceptor end of tRNA(Asp/Asn). This chain is Aspartate--tRNA(Asp/Asn) ligase, found in Chlorobium luteolum (strain DSM 273 / BCRC 81028 / 2530) (Pelodictyon luteolum).